Here is a 283-residue protein sequence, read N- to C-terminus: Pantothenate synthetase (283 aa).

An ATP-binding site is contributed by 30 to 37 (MGYLHEGH). The active-site Proton donor is H37. Q61 lines the (R)-pantoate pocket. Q61 contributes to the beta-alanine binding site. 147–150 (GLKD) serves as a coordination point for ATP. Residue Q153 coordinates (R)-pantoate. Residues V176 and 184–187 (KSSR) each bind ATP.

The protein belongs to the pantothenate synthetase family. In terms of assembly, homodimer.

The protein resides in the cytoplasm. The catalysed reaction is (R)-pantoate + beta-alanine + ATP = (R)-pantothenate + AMP + diphosphate + H(+). The protein operates within cofactor biosynthesis; (R)-pantothenate biosynthesis; (R)-pantothenate from (R)-pantoate and beta-alanine: step 1/1. In terms of biological role, catalyzes the condensation of pantoate with beta-alanine in an ATP-dependent reaction via a pantoyl-adenylate intermediate. The polypeptide is Pantothenate synthetase (Halalkalibacterium halodurans (strain ATCC BAA-125 / DSM 18197 / FERM 7344 / JCM 9153 / C-125) (Bacillus halodurans)).